Reading from the N-terminus, the 306-residue chain is Glutaminase (306 aa).

Substrate-binding residues include S61, N111, E157, N164, Y188, Y240, and V258.

This sequence belongs to the glutaminase family. As to quaternary structure, homotetramer.

The catalysed reaction is L-glutamine + H2O = L-glutamate + NH4(+). The sequence is that of Glutaminase from Psychrobacter cryohalolentis (strain ATCC BAA-1226 / DSM 17306 / VKM B-2378 / K5).